A 93-amino-acid chain; its full sequence is Putative defensin-like protein 190 (93 aa).

A signal peptide spans 1-30; that stretch reads MKMAKAAATNDFGFITCLVIFLVLAGISNG. 4 disulfides stabilise this stretch: Cys-39–Cys-89, Cys-55–Cys-75, Cys-60–Cys-84, and Cys-64–Cys-86.

It belongs to the DEFL family.

The protein localises to the secreted. This Arabidopsis thaliana (Mouse-ear cress) protein is Putative defensin-like protein 190.